The primary structure comprises 53 residues: ATP synthase F(0) complex subunit 8 (53 aa).

Residues 8–24 traverse the membrane as a helical segment; the sequence is PWLTTFLIVWISLIVIL.

Belongs to the ATPase protein 8 family. As to quaternary structure, component of the ATP synthase complex composed at least of ATP5F1A/subunit alpha, ATP5F1B/subunit beta, ATP5MC1/subunit c (homooctomer), MT-ATP6/subunit a, MT-ATP8/subunit 8, ATP5ME/subunit e, ATP5MF/subunit f, ATP5MG/subunit g, ATP5MK/subunit k, ATP5MJ/subunit j, ATP5F1C/subunit gamma, ATP5F1D/subunit delta, ATP5F1E/subunit epsilon, ATP5PF/subunit F6, ATP5PB/subunit b, ATP5PD/subunit d, ATP5PO/subunit OSCP. ATP synthase complex consists of a soluble F(1) head domain (subunits alpha(3) and beta(3)) - the catalytic core - and a membrane F(0) domain - the membrane proton channel (subunits c, a, 8, e, f, g, k and j). These two domains are linked by a central stalk (subunits gamma, delta, and epsilon) rotating inside the F1 region and a stationary peripheral stalk (subunits F6, b, d, and OSCP).

The protein localises to the mitochondrion membrane. Subunit 8, of the mitochondrial membrane ATP synthase complex (F(1)F(0) ATP synthase or Complex V) that produces ATP from ADP in the presence of a proton gradient across the membrane which is generated by electron transport complexes of the respiratory chain. ATP synthase complex consist of a soluble F(1) head domain - the catalytic core - and a membrane F(1) domain - the membrane proton channel. These two domains are linked by a central stalk rotating inside the F(1) region and a stationary peripheral stalk. During catalysis, ATP synthesis in the catalytic domain of F(1) is coupled via a rotary mechanism of the central stalk subunits to proton translocation. In vivo, can only synthesize ATP although its ATP hydrolase activity can be activated artificially in vitro. Part of the complex F(0) domain. The protein is ATP synthase F(0) complex subunit 8 of Alligator mississippiensis (American alligator).